Here is a 298-residue protein sequence, read N- to C-terminus: Leucine-rich repeat-containing protein 55 (298 aa).

The N-terminal stretch at 1–34 is a signal peptide; that stretch reads MGDTWAQLPWPGPPHSALLLVFFLLAAGVMHSDA. The LRRNT domain maps to 35–65; the sequence is GTSCPVLCTCRNQVVDCSNQRLFSVPPDLPM. 2 cysteine pairs are disulfide-bonded: Cys-38–Cys-44 and Cys-42–Cys-51. LRR repeat units follow at residues 66–87, 90–111, 114–135, 138–160, and 163–186; these read DTRN…YLTC, ELRV…LFLH, RLAH…MFRE, GLVH…AFQG, and HLRD…EGLP. The LRRCT domain maps to 196-251; it reads NPWVCGCTMEPLLKWLRNRIQRCTADSQLAECRGPPEVEGAPLFSLTEESFKACHL. Disulfide bonds link Cys-200/Cys-227 and Cys-202/Cys-249. A helical membrane pass occupies residues 259-279; sequence LFIAFVGFVVSIASVATNFLL.

In terms of assembly, interacts with KCNMA1.

It localises to the cell membrane. In terms of biological role, auxiliary protein of the large-conductance, voltage and calcium-activated potassium channel (BK alpha). Modulates gating properties by producing a marked shift in the BK channel's voltage dependence of activation in the hyperpolarizing direction, and in the absence of calcium. This Mus musculus (Mouse) protein is Leucine-rich repeat-containing protein 55 (Lrrc55).